Here is a 722-residue protein sequence, read N- to C-terminus: MAVALLVALCVVSSRMALPSEAVPFYRQDSEVCNSPVCQKAAQTLLESMDTSVDPCQDFYQYACGEWIRKHPIPEEKFRISPLDALYDNVLDTVAEILKNATSENHATSVLKSANYFQACMDAEARETQGVEPLKNLLTSLGGWPMATPGWSGANYHWQTQVATVTRNLGIRPIIDVFVDADANRTSQHIINLDQADFGLGRNQLINLTSSSRTQEIVAGYRNYIIASAKLLNPNADDIQLANDADEIIQFESTLAQFSTPPEERRDASSWYHKMTVAEVQTVTENTYFQWTEFLNTVLKEFPQVMPETEVILYERDYTKNVLKLAHETNPRILANYIGWIVLMKEGYHTTRQFRENKFQFEKVQIGIEKEEKLERVCTDHTIGLLGYAVGRLYVDKFFTEEEKQDIDELVENIRSAYKSTLRNNTWMDHVTRNKAIDKLEAMINKMAYPTWIKNDNELNEYYRSVPAINRDEFFSSLLKVTKVVKAIQLGKWNKPTDRIKDWITTPAVVNAFYSPDSNSMSFPAGILNWPLYQYGTSPALNYGAIGAIIGHEMSHGFDDQGGQTDPEGNLVDWWLEETKAKFNQKADCFRKQYSSYLEPTTNMHLNGNNTVGENIADNGAVRNAFIAYKMHLLHSQNNHVMRKKTLPGLSATAEQLFFLGYSTMWCGAERKESLEWSIQYDSHTPSEFRAVVPLTNSRSFAEAFGCASGTPMNPTHKCLLW.

The first 17 residues, 1–17 (MAVALLVALCVVSSRMA), serve as a signal peptide directing secretion. In terms of domain architecture, Peptidase M13 spans 32-722 (VCNSPVCQKA…MNPTHKCLLW (691 aa)). Intrachain disulfides connect cysteine 33–cysteine 38, cysteine 56–cysteine 707, cysteine 64–cysteine 667, cysteine 120–cysteine 378, and cysteine 589–cysteine 719. Residues asparagine 100, asparagine 184, asparagine 207, and asparagine 424 are each glycosylated (N-linked (GlcNAc...) asparagine). Histidine 552 is a Zn(2+) binding site. Glutamate 553 is an active-site residue. Residue histidine 556 participates in Zn(2+) binding. Asparagine 609 carries N-linked (GlcNAc...) asparagine glycosylation. Glutamate 614 is a Zn(2+) binding site. Aspartate 618 acts as the Proton donor in catalysis.

The protein belongs to the peptidase M13 family. It depends on Zn(2+) as a cofactor. In terms of processing, contains 5 disulfide bonds. As to expression, expressed by the venom gland.

The protein localises to the secreted. The sequence is that of Neprilysin-1 from Trittame loki (Brush-footed trapdoor spider).